A 283-amino-acid chain; its full sequence is MTETRRLRILITNDDGIKAKGISLLISLLREADFADLYVVAPLEEQSGRSMAFSLVEPTALEPFDYPQRVQEAWAVTGTPVDCVKLAIGELFKENALDLILSGINNGKNSGRCLYYSATVGAIREANLHGIPAIALSQSENIAFFQKAHMASLIRSLCEFTVAYKHTDPLGLNVNFPASTDDSPWKGIRFTLSGNEFLFGIPRLVRTEGNRRYYTLYDMRDKVSEEFSEEYLALANNYISAAPLVSKNTPRATLSEEELAFLKDSFEQSVLWKASLNLEEDLA.

Residues aspartate 14, aspartate 15, serine 47, and asparagine 105 each coordinate a divalent metal cation.

Belongs to the SurE nucleotidase family. Requires a divalent metal cation as cofactor.

Its subcellular location is the cytoplasm. It catalyses the reaction a ribonucleoside 5'-phosphate + H2O = a ribonucleoside + phosphate. Its function is as follows. Nucleotidase that shows phosphatase activity on nucleoside 5'-monophosphates. The polypeptide is 5'-nucleotidase SurE (Chlamydia trachomatis serovar D (strain ATCC VR-885 / DSM 19411 / UW-3/Cx)).